Here is a 320-residue protein sequence, read N- to C-terminus: o-succinylbenzoate synthase (320 aa).

Catalysis depends on K133, which acts as the Proton donor. Residues D161, E190, and D213 each coordinate Mg(2+). K235 serves as the catalytic Proton acceptor.

It belongs to the mandelate racemase/muconate lactonizing enzyme family. MenC type 1 subfamily. A divalent metal cation is required as a cofactor.

It carries out the reaction (1R,6R)-6-hydroxy-2-succinyl-cyclohexa-2,4-diene-1-carboxylate = 2-succinylbenzoate + H2O. Its pathway is quinol/quinone metabolism; 1,4-dihydroxy-2-naphthoate biosynthesis; 1,4-dihydroxy-2-naphthoate from chorismate: step 4/7. It functions in the pathway quinol/quinone metabolism; menaquinone biosynthesis. In terms of biological role, converts 2-succinyl-6-hydroxy-2,4-cyclohexadiene-1-carboxylate (SHCHC) to 2-succinylbenzoate (OSB). This chain is o-succinylbenzoate synthase, found in Salmonella heidelberg (strain SL476).